The following is a 269-amino-acid chain: Undecaprenyl-diphosphatase (269 aa).

The next 8 helical transmembrane spans lie at 3 to 23, 41 to 61, 78 to 98, 107 to 127, 148 to 167, 184 to 204, 213 to 233, and 248 to 268; these read LLIK…LPIS, FATM…VFYY, GFNL…IGLL, LFSP…MIVI, SLLI…SRSA, AEFS…LSLL, LEWQ…LFVV, and FAYY…EKIV.

It belongs to the UppP family.

It localises to the cell membrane. It catalyses the reaction di-trans,octa-cis-undecaprenyl diphosphate + H2O = di-trans,octa-cis-undecaprenyl phosphate + phosphate + H(+). Its function is as follows. Catalyzes the dephosphorylation of undecaprenyl diphosphate (UPP). Confers resistance to bacitracin. The sequence is that of Undecaprenyl-diphosphatase from Thermoanaerobacter sp. (strain X514).